The sequence spans 305 residues: Peroxisome biogenesis factor 2 (305 aa).

Over 1-15 (MAAREESTQSANRVL) the chain is Peroxisomal matrix. Residues 16-42 (RISQLDALELNKALEQLVWSQFTQCFH) form a helical membrane-spanning segment. At 43–48 (GFKPGL) the chain is on the cytoplasmic side. Residues 49 to 74 (LARFEPEVKAFLWLFLWRFTIYSKNA) form a helical membrane-spanning segment. Topologically, residues 75-98 (TVGQSVLNIQHKNDSSPNPVYQPP) are peroxisomal matrix. The helical transmembrane segment at 99–125 (SKNQKLLYAVCTIGGRWLEERCYDLFR) threads the bilayer. Over 126–133 (NRHLASFG) the chain is Cytoplasmic. Residues 134 to 160 (KAKQCMNFVVGLLKLGELMNFLIFLQK) form a helical membrane-spanning segment. Topologically, residues 161 to 187 (GKFATLTERLLGIHSVFCKPQNMREVG) are peroxisomal matrix. Residues 188 to 211 (FEYMNRELLWHGFAEFLIFLLPLI) traverse the membrane as a helical segment. Over 212-305 (NIQKLKAKLS…GIQMSEVNAL (94 aa)) the chain is Cytoplasmic. The Zn(2+) site is built by Cys244, Cys247, Cys259, His261, Cys264, Cys267, Cys280, and Cys283. An RING-type zinc finger spans residues 244–284 (CALCGEWPTMPHTIGCEHVFCYYCVKSSFLFDIYFTCPKCG).

It belongs to the pex2/pex10/pex12 family. As to quaternary structure, component of the PEX2-PEX10-PEX12 retrotranslocation channel, composed of PEX2, PEX10 and PEX12. In terms of processing, forms intramolecular and intermolecular disulfide bonds in response to reactive oxygen species (ROS), promoting higher stability.

It localises to the peroxisome membrane. It carries out the reaction [E2 ubiquitin-conjugating enzyme]-S-ubiquitinyl-L-cysteine + [acceptor protein]-L-cysteine = [E2 ubiquitin-conjugating enzyme]-L-cysteine + [acceptor protein]-S-ubiquitinyl-L-cysteine.. The catalysed reaction is S-ubiquitinyl-[E2 ubiquitin-conjugating enzyme]-L-cysteine + [acceptor protein]-L-lysine = [E2 ubiquitin-conjugating enzyme]-L-cysteine + N(6)-ubiquitinyl-[acceptor protein]-L-lysine.. Its pathway is protein modification; protein ubiquitination. E3 ubiquitin-protein ligase component of a retrotranslocation channel required for peroxisome organization by mediating export of the PEX5 receptor from peroxisomes to the cytosol, thereby promoting PEX5 recycling. The retrotranslocation channel is composed of PEX2, PEX10 and PEX12; each subunit contributing transmembrane segments that coassemble into an open channel that specifically allows the passage of PEX5 through the peroxisomal membrane. PEX2 also regulates peroxisome organization by acting as a E3 ubiquitin-protein ligase. PEX2 ubiquitinates PEX5 during its passage through the retrotranslocation channel: catalyzes monoubiquitination of PEX5 at 'Cys-11', a modification that acts as a signal for PEX5 extraction into the cytosol. Required for pexophagy in response to starvation by mediating ubiquitination of peroxisomal proteins, such as PEX5 and ABCD3/PMP70. Also involved in the response to reactive oxygen species (ROS) by mediating 'Lys-48'-linked polyubiquitination and subsequent degradation of PNPLA2/ATGL, thereby regulating lipolysis. The polypeptide is Peroxisome biogenesis factor 2 (Mus musculus (Mouse)).